Consider the following 68-residue polypeptide: uncharacterized protein (68 aa).

Residues 24-44 (AHICKCIAMFFVVAGVVLMFF) traverse the membrane as a helical segment.

The protein localises to the endoplasmic reticulum. It localises to the membrane. This is an uncharacterized protein from Saccharomyces cerevisiae (strain ATCC 204508 / S288c) (Baker's yeast).